The following is a 990-amino-acid chain: Importin beta-like protein kap111 (990 aa).

It belongs to the importin beta family.

Its subcellular location is the nucleus. Its function is as follows. Functions as a component of the nuclear pore complex (NPC). NPC components, collectively referred to as nucleoporins (NUPs), can play the role of both NPC structural components and of docking or interaction partners for transiently associated nuclear transport factors. Active directional transport is assured by both, a Phe-Gly (FG) repeat affinity gradient for these transport factors across the NPC and a transport cofactor concentration gradient across the nuclear envelope. In Schizosaccharomyces pombe (strain 972 / ATCC 24843) (Fission yeast), this protein is Importin beta-like protein kap111 (kap111).